The following is a 436-amino-acid chain: WD repeat domain phosphoinositide-interacting protein 2 (436 aa).

The WD 1 repeat unit spans residues 182–222 (AHDSPLAALAFDASGTKLATASEKGTVIRVFSIPEGQKLFE). A L/FRRG motif motif is present at residues 223-226 (FRRG). WD repeat units lie at residues 228-267 (KRCV…EKPQ) and 311-349 (GHKN…GGEC).

Belongs to the WD repeat PROPPIN family.

It is found in the preautophagosomal structure membrane. Functionally, component of the autophagy machinery that controls the major intracellular degradation process by which cytoplasmic materials are packaged into autophagosomes and delivered to lysosomes for degradation. Involved in an early step of the formation of preautophagosomal structures. The chain is WD repeat domain phosphoinositide-interacting protein 2 (WIPI2) from Gallus gallus (Chicken).